Reading from the N-terminus, the 68-residue chain is Peptide Hp1090 (68 aa).

Residues 1–23 (MKTQFAIFLITLVLFQMFSQSDA) form the signal peptide. A Phenylalanine amide modification is found at phenylalanine 36. The propeptide occupies 40–68 (GLSDLDDLDESFDGEVSQADIDFLKELMQ).

Belongs to the non-disulfide-bridged peptide (NDBP) superfamily. Short antimicrobial peptide (group 4) family. In terms of tissue distribution, expressed by the venom gland.

The protein localises to the secreted. It is found in the target cell membrane. In terms of biological role, amphipathic peptide which inhibits the growth of Gram-positive bacteria. In Heterometrus petersii (Asian forest scorpion), this protein is Peptide Hp1090.